The following is a 664-amino-acid chain: Macrolide export ATP-binding/permease protein MacB (664 aa).

An ABC transporter domain is found at 8 to 245 (LELVDVHRTY…AGPSVPLTLD (238 aa)). 44 to 51 (GSSGSGKS) is an ATP binding site. The next 4 membrane-spanning stretches (helical) occupy residues 283–303 (LLSV…MALG), 543–563 (GAIA…IMLV), 602–622 (IIGI…AGWA), and 627–647 (IVSI…FGLW).

It belongs to the ABC transporter superfamily. Macrolide exporter (TC 3.A.1.122) family. As to quaternary structure, homodimer.

The protein localises to the cell inner membrane. Its function is as follows. Non-canonical ABC transporter that contains transmembrane domains (TMD), which form a pore in the inner membrane, and an ATP-binding domain (NBD), which is responsible for energy generation. Confers resistance against macrolides. The chain is Macrolide export ATP-binding/permease protein MacB from Chlorobium luteolum (strain DSM 273 / BCRC 81028 / 2530) (Pelodictyon luteolum).